Consider the following 155-residue polypeptide: SsrA-binding protein (155 aa).

It belongs to the SmpB family.

The protein resides in the cytoplasm. Required for rescue of stalled ribosomes mediated by trans-translation. Binds to transfer-messenger RNA (tmRNA), required for stable association of tmRNA with ribosomes. tmRNA and SmpB together mimic tRNA shape, replacing the anticodon stem-loop with SmpB. tmRNA is encoded by the ssrA gene; the 2 termini fold to resemble tRNA(Ala) and it encodes a 'tag peptide', a short internal open reading frame. During trans-translation Ala-aminoacylated tmRNA acts like a tRNA, entering the A-site of stalled ribosomes, displacing the stalled mRNA. The ribosome then switches to translate the ORF on the tmRNA; the nascent peptide is terminated with the 'tag peptide' encoded by the tmRNA and targeted for degradation. The ribosome is freed to recommence translation, which seems to be the essential function of trans-translation. In Gloeothece citriformis (strain PCC 7424) (Cyanothece sp. (strain PCC 7424)), this protein is SsrA-binding protein.